Reading from the N-terminus, the 355-residue chain is Uroporphyrinogen decarboxylase (355 aa).

Substrate is bound by residues 27 to 31 (RQAGR), aspartate 78, tyrosine 155, serine 210, and histidine 328.

It belongs to the uroporphyrinogen decarboxylase family. Homodimer.

The protein resides in the cytoplasm. The enzyme catalyses uroporphyrinogen III + 4 H(+) = coproporphyrinogen III + 4 CO2. It functions in the pathway porphyrin-containing compound metabolism; protoporphyrin-IX biosynthesis; coproporphyrinogen-III from 5-aminolevulinate: step 4/4. Catalyzes the decarboxylation of four acetate groups of uroporphyrinogen-III to yield coproporphyrinogen-III. This chain is Uroporphyrinogen decarboxylase, found in Ectopseudomonas mendocina (strain ymp) (Pseudomonas mendocina).